A 170-amino-acid polypeptide reads, in one-letter code: Adenine phosphoribosyltransferase (170 aa).

Belongs to the purine/pyrimidine phosphoribosyltransferase family. In terms of assembly, homodimer.

The protein localises to the cytoplasm. It carries out the reaction AMP + diphosphate = 5-phospho-alpha-D-ribose 1-diphosphate + adenine. It functions in the pathway purine metabolism; AMP biosynthesis via salvage pathway; AMP from adenine: step 1/1. Functionally, catalyzes a salvage reaction resulting in the formation of AMP, that is energically less costly than de novo synthesis. The chain is Adenine phosphoribosyltransferase from Geobacillus kaustophilus (strain HTA426).